The primary structure comprises 354 residues: Ribosomal RNA large subunit methyltransferase M (354 aa).

S-adenosyl-L-methionine-binding positions include Ser183, 216-219, Asp235, Asp255, and Asp271; that span reads SPGG. Residue Lys300 is the Proton acceptor of the active site.

It belongs to the class I-like SAM-binding methyltransferase superfamily. RNA methyltransferase RlmE family. RlmM subfamily. As to quaternary structure, monomer.

The protein localises to the cytoplasm. It catalyses the reaction cytidine(2498) in 23S rRNA + S-adenosyl-L-methionine = 2'-O-methylcytidine(2498) in 23S rRNA + S-adenosyl-L-homocysteine + H(+). In terms of biological role, catalyzes the 2'-O-methylation at nucleotide C2498 in 23S rRNA. The sequence is that of Ribosomal RNA large subunit methyltransferase M from Pseudomonas putida (strain GB-1).